Consider the following 409-residue polypeptide: 3-isopropylmalate dehydrogenase 1, chloroplastic (409 aa).

A chloroplast-targeting transit peptide spans 1-37 (MAAFLQTNISLNAIKIVPGKYSSLTDHQFRAPYRIRC). The residue at position 74 (Ser74) is a Phosphoserine. NAD(+) is bound at residue 118-133 (IGGYKWDKNEKHLRPE). Positions 140, 150, and 178 each coordinate substrate. Residue Asn238 coordinates NAD(+). Asp268 lines the substrate pocket. Mg(2+) is bound at residue Asp268. Asn269 lines the NAD(+) pocket. Residues Asp292 and Asp296 each coordinate Mg(2+). 322 to 338 (EPIHGSAPDIAGQDKAN) is an NAD(+) binding site.

The protein belongs to the isocitrate and isopropylmalate dehydrogenases family. In terms of assembly, homodimer. The cofactor is Mg(2+). Requires Mn(2+) as cofactor. Highly expressed in seedlings, leaves, stems and roots and, to a lower extent, in flowers, pollen and siliques.

It is found in the plastid. The protein resides in the chloroplast stroma. The enzyme catalyses (2R,3S)-3-isopropylmalate + NAD(+) = 4-methyl-2-oxopentanoate + CO2 + NADH. It participates in amino-acid biosynthesis; L-leucine biosynthesis; L-leucine from 3-methyl-2-oxobutanoate: step 3/4. The protein operates within secondary metabolite biosynthesis. Regulated by a thiol-based redox modification; oxidation by CuCl(2) leads to a decreased activity. In terms of biological role, involved in both glucosinolate and leucine biosynthesis; catalyzes the oxidative decarboxylation step in both leucine biosynthesis (primary metabolism) and methionine chain elongation of glucosinolates (specialized metabolism). Catalyzes the oxidation of 3-carboxy-2-hydroxy-4-methylpentanoate (3-isopropylmalate, 3-IPM) to 3-carboxy-4-methyl-2-oxopentanoate. The product decarboxylates to 4-methyl-2 oxopentanoate. Required during pollen development and involved in embryo sac development. More active on 3-isopropylmalate and NAD(+) than towards D-malate. This is 3-isopropylmalate dehydrogenase 1, chloroplastic from Arabidopsis thaliana (Mouse-ear cress).